A 372-amino-acid polypeptide reads, in one-letter code: Chaperone protein DnaJ (372 aa).

The 66-residue stretch at 5 to 70 (DYYDLLEVSR…EKRAGYDRYG (66 aa)) folds into the J domain. The CR-type zinc-finger motif lies at 134–212 (GIQAPIHYVT…CGGSGRKRDE (79 aa)). Positions 147, 150, 164, 167, 186, 189, 200, and 203 each coordinate Zn(2+). CXXCXGXG motif repeat units lie at residues 147-154 (CNTCQGTG), 164-171 (CNTCQGSG), 186-193 (CTTCYGEG), and 200-207 (CKKCGGSG).

The protein belongs to the DnaJ family. Homodimer. Zn(2+) is required as a cofactor.

The protein localises to the cytoplasm. In terms of biological role, participates actively in the response to hyperosmotic and heat shock by preventing the aggregation of stress-denatured proteins and by disaggregating proteins, also in an autonomous, DnaK-independent fashion. Unfolded proteins bind initially to DnaJ; upon interaction with the DnaJ-bound protein, DnaK hydrolyzes its bound ATP, resulting in the formation of a stable complex. GrpE releases ADP from DnaK; ATP binding to DnaK triggers the release of the substrate protein, thus completing the reaction cycle. Several rounds of ATP-dependent interactions between DnaJ, DnaK and GrpE are required for fully efficient folding. Also involved, together with DnaK and GrpE, in the DNA replication of plasmids through activation of initiation proteins. The protein is Chaperone protein DnaJ of Wolbachia pipientis subsp. Culex pipiens (strain wPip).